A 94-amino-acid polypeptide reads, in one-letter code: Cell division topological specificity factor (94 aa).

It belongs to the MinE family.

In terms of biological role, prevents the cell division inhibition by proteins MinC and MinD at internal division sites while permitting inhibition at polar sites. This ensures cell division at the proper site by restricting the formation of a division septum at the midpoint of the long axis of the cell. In Beijerinckia indica subsp. indica (strain ATCC 9039 / DSM 1715 / NCIMB 8712), this protein is Cell division topological specificity factor.